The sequence spans 391 residues: MAVSESQLKKMMSKYKYRDLTVRQTVNVIAMYKDLKPVLDSYVFNDGSSRELVNLTGTIPVRYRGNIYNIPICLWLLDTYPYNPPICFVKPTSSMTIKTGKHVDANGKIYLPYLHDWKHPRSELLELIQIMIVIFGEEPPVFSRPTVSASYPPYTATGPPNTSYMPGMPSGISAYPSGYPPNPSGYPGCPYPPAGPYPATTSSQYPSQPPVTTVGPSRDGTISEDTIRASLISAVSDKLRWRMKEEMDGAQAELNALKRTEEDLKKGHQKLEEMVTRLDQEVAEVDKNIELLKKKDEELSSALEKMENQSENNDIDEVIIPTAPLYKQILNLYAEENAIEDTIFYLGEALRRGVIDLDVFLKHVRLLSRKQFQLRALMQKARKTAGLSDLY.

An N-acetylalanine modification is found at A2. The 144-residue stretch at A2–P145 folds into the UEV domain. The tract at residues P159–S163 is interaction with CEP55. The disordered stretch occupies residues Y197 to G220. The span at T200–G215 shows a compositional bias: polar residues. T221 is modified (phosphothreonine). The stretch at D237–E317 forms a coiled coil. The PTAP/PSAP motif motif lies at P321–P324. The 69-residue stretch at A323–Y391 folds into the SB domain.

Belongs to the ubiquitin-conjugating enzyme family. UEV subfamily. As to quaternary structure, component of the ESCRT-I complex (endosomal sorting complex required for transport I) which consists of TSG101, VPS28, a VPS37 protein (VPS37A to -D) and MVB12A or MVB12B in a 1:1:1:1 stoichiometry. Interacts with VPS37A, VPS37B and VPS37C. Component of an ESCRT-I complex (endosomal sorting complex required for transport I) which consists of TSG101, VPS28, VPS37A and UBAP1 in a 1:1:1:1 stoichiometry. Interacts with DMAP1. Interacts with GMCL. Interacts with ubiquitin, stathmin and AATF. Interacts with HGS; the interaction mediates the association with the ESCRT-0 complex. Interacts with GGA1 and GGA3. Interacts (via UEV domain) with PDCD6IP/AIP1. Interacts with VPS28, SNF8 and VPS36. Self-associates. Interacts with MVB12A; the association appears to be mediated by the TSG101-VPS37 binary subcomplex. Interacts with VPS37D. Interacts with LRSAM1. Interacts with CEP55; the interaction is required for cytokinesis. Interacts with PDCD6. Interacts with LITAF. Interacts with murine leukemia virus Gag polyprotein (via PSAP motif). Interacts with MGRN1. Interacts with ARRDC1; recruits TSG101 to the plasma membrane. In terms of processing, monoubiquitinated at multiple sites by LRSAM1 and by MGRN1. Ubiquitination inactivates it, possibly by regulating its shuttling between an active membrane-bound protein and an inactive soluble form. Ubiquitination by MGRN1 requires the presence of UBE2D1. Ubiquitous. Higher expression in brain and mammary gland. Lower expression in liver and tumoral tissues.

Its subcellular location is the cytoplasm. The protein resides in the early endosome membrane. It localises to the late endosome membrane. It is found in the cytoskeleton. The protein localises to the microtubule organizing center. Its subcellular location is the centrosome. The protein resides in the midbody. It localises to the midbody ring. It is found in the nucleus. In terms of biological role, component of the ESCRT-I complex, a regulator of vesicular trafficking process. Binds to ubiquitinated cargo proteins and is required for the sorting of endocytic ubiquitinated cargos into multivesicular bodies (MVBs). Mediates the association between the ESCRT-0 and ESCRT-I complex. Required for completion of cytokinesis; the function requires CEP55. May be involved in cell growth and differentiation. Acts as a negative growth regulator. Required for the exosomal release of SDCBP, CD63 and syndecan. It may also play a role in the extracellular release of microvesicles that differ from the exosomes. This Mus musculus (Mouse) protein is Tumor susceptibility gene 101 protein (Tsg101).